Consider the following 348-residue polypeptide: tRNA pseudouridine synthase D (348 aa).

Position 27 (Phe27) interacts with substrate. Catalysis depends on Asp80, which acts as the Nucleophile. Asn129 contributes to the substrate binding site. The region spanning 155–303 (GVPNYFGSQR…VEPARRAVLL (149 aa)) is the TRUD domain. A substrate-binding site is contributed by Phe329.

Belongs to the pseudouridine synthase TruD family.

It catalyses the reaction uridine(13) in tRNA = pseudouridine(13) in tRNA. Its function is as follows. Responsible for synthesis of pseudouridine from uracil-13 in transfer RNAs. In Pectobacterium atrosepticum (strain SCRI 1043 / ATCC BAA-672) (Erwinia carotovora subsp. atroseptica), this protein is tRNA pseudouridine synthase D.